The chain runs to 213 residues: Urease accessory protein UreG (213 aa).

12–19 provides a ligand contact to GTP; sequence GPVGSGKT.

Belongs to the SIMIBI class G3E GTPase family. UreG subfamily. As to quaternary structure, homodimer. UreD, UreF and UreG form a complex that acts as a GTP-hydrolysis-dependent molecular chaperone, activating the urease apoprotein by helping to assemble the nickel containing metallocenter of UreC. The UreE protein probably delivers the nickel.

It localises to the cytoplasm. In terms of biological role, facilitates the functional incorporation of the urease nickel metallocenter. This process requires GTP hydrolysis, probably effectuated by UreG. In Marinomonas sp. (strain MWYL1), this protein is Urease accessory protein UreG.